Reading from the N-terminus, the 172-residue chain is MGIGVNTDLPRNEQIKAPKVRVVDENGKMIGVMPTRKALELAREKGLDLVLVAPNENPPVARIMDYGKYKYQLTKKQKENKKKPVQMKQMKFRLKIDEHDYQTKVKHIRRFLEDGHKVRVVVMFIGREMMFAEKGKEILERVIKDTEDLATVESPPKMEGRDMWMVLKPKNS.

It belongs to the IF-3 family. As to quaternary structure, monomer.

It is found in the cytoplasm. In terms of biological role, IF-3 binds to the 30S ribosomal subunit and shifts the equilibrium between 70S ribosomes and their 50S and 30S subunits in favor of the free subunits, thus enhancing the availability of 30S subunits on which protein synthesis initiation begins. The polypeptide is Translation initiation factor IF-3 (Thermotoga maritima (strain ATCC 43589 / DSM 3109 / JCM 10099 / NBRC 100826 / MSB8)).